The sequence spans 401 residues: Short chain dehydrogenase/reductase dpchH (401 aa).

N16 carries N-linked (GlcNAc...) asparagine glycosylation. A helical transmembrane segment spans residues 51-71; that stretch reads VRAVDVLFGTFLYVPLGILFL. NAD(+)-binding positions include 72–80, 99–100, and 118–120; these read KKSLSGFGD, TG, and AKV. N-linked (GlcNAc...) asparagine glycosylation occurs at N242. The Proton acceptor role is filled by Y275. NAD(+) contacts are provided by residues 275-279 and 308-310; these read YGTSK and GTI. The N-linked (GlcNAc...) asparagine glycan is linked to N386.

It is found in the membrane. It functions in the pathway secondary metabolite biosynthesis; terpenoid biosynthesis. In terms of biological role, short chain dehydrogenase/reductase; part of the gene cluster that mediates the biosynthesis of the diterpenoid pyrones higginsianins A and B. The first step of the pathway is the synthesis of the alpha-pyrone moiety by the polyketide synthase dpchA via condensation of one acetyl-CoA starter unit with 3 malonyl-CoA units and 2 methylations. The alpha-pyrone is then combined with geranylgeranyl pyrophosphate (GGPP) formed by the GGPP synthase dpchD through the action of the prenyltransferase dpchC to yield a linear alpha-pyrone diterpenoid. Subsequent steps in the diterpenoid pyrone biosynthetic pathway involve the decalin core formation, which is initiated by the epoxidation of the C10-C11 olefin by the FAD-dependent oxidoreductase dpchE, and is followed by a cyclization cascade catalyzed by the terpene cyclase dpchB. The short chain dehydrogenase/reductase dpchG then oxidizes the 8S hydroxy group to a ketone and the short chain dehydrogenase/reductase dpchH reduces the ketone to the 8R hydroxy group to yield higginsianin B. Finally, the FAD-dependent oxidoreductase dpchF converts higginsianin B into higginsianin A. The sequence is that of Short chain dehydrogenase/reductase dpchH from Colletotrichum higginsianum (strain IMI 349063) (Crucifer anthracnose fungus).